A 212-amino-acid chain; its full sequence is Probable GTP-binding protein EngB (212 aa).

The EngB-type G domain occupies 38–210 (SLPEIAFVGK…KASLAKCIKF (173 aa)). GTP contacts are provided by residues 46–53 (GKSNVGKS), 73–77 (GRTRQ), 91–94 (DLPG), 158–161 (TKSD), and 189–191 (VSN). Serine 53 and threonine 75 together coordinate Mg(2+).

The protein belongs to the TRAFAC class TrmE-Era-EngA-EngB-Septin-like GTPase superfamily. EngB GTPase family. It depends on Mg(2+) as a cofactor.

In terms of biological role, necessary for normal cell division and for the maintenance of normal septation. The protein is Probable GTP-binding protein EngB of Rickettsia rickettsii (strain Sheila Smith).